The sequence spans 480 residues: MVDTVDKLGYFQAITGLEDADLCTEILQAHGWDLELAISSFTSSDQDASSSAVDGGGNNRDHDHNNATVTPDYPPRGIVDDTELVMRDDGGGNRGPGVAWRIITLPISIVSGSLGLVSGAIGLGIWAAGGVLSYSLGMLGFRSGRGGGSESARLVSVSSAVGEAMEFVALFDRDYGSNNAFKIDFVVEGFMDALQRSRSSFKLLFVYLHSPDHPDTPVFCGGTLCNEAVVAFVNENFVSWGGSIRSSEGFKMSNSLKASRFPFCAVVMPAANQRIALLQQVEGPKSPEEMLAILQRIVEDSSPTLVTARVEAEERRTNLRLREEQDAAYRAALEADQAREQQRQEEKERLEREAAEAERKLKEEEEARERAAREAEERQAARVRMRQEKALALGEEPEKGPDVTQVLVRFPNGERKGRMFKSETKIQTLYDYVDSLGLLDTEEYSLITNFPRTVYGRDKESMSLKDAGLHPQASLFIEIN.

Disordered regions lie at residues 47–78 (DASSSAVDGGGNNRDHDHNNATVTPDYPPRGI) and 335–383 (ADQA…AARV). A coiled-coil region spans residues 330-389 (RAALEADQAREQQRQEEKERLEREAAEAERKLKEEEEARERAAREAEERQAARVRMRQEK). Over residues 336-383 (DQAREQQRQEEKERLEREAAEAERKLKEEEEARERAAREAEERQAARV) the composition is skewed to basic and acidic residues. In terms of domain architecture, UBX spans 399-477 (KGPDVTQVLV…GLHPQASLFI (79 aa)).

The polypeptide is Plant UBX domain-containing protein 10 (Arabidopsis thaliana (Mouse-ear cress)).